We begin with the raw amino-acid sequence, 173 residues long: NADH-ubiquinone oxidoreductase chain 6 (173 aa).

Transmembrane regions (helical) follow at residues 1 to 21 (MTYF…AVAS), 27 to 47 (YGVV…LSLG), 48 to 68 (VSFV…VVFV), 87 to 107 (VVGY…VGGL), and 139 to 159 (CGVG…FVVL).

This sequence belongs to the complex I subunit 6 family.

It is found in the mitochondrion membrane. It carries out the reaction a ubiquinone + NADH + 5 H(+)(in) = a ubiquinol + NAD(+) + 4 H(+)(out). Functionally, core subunit of the mitochondrial membrane respiratory chain NADH dehydrogenase (Complex I) that is believed to belong to the minimal assembly required for catalysis. Complex I functions in the transfer of electrons from NADH to the respiratory chain. The immediate electron acceptor for the enzyme is believed to be ubiquinone. In Synthliboramphus wumizusume (Japanese murrelet), this protein is NADH-ubiquinone oxidoreductase chain 6 (MT-ND6).